A 312-amino-acid polypeptide reads, in one-letter code: Ornithine carbamoyltransferase (312 aa).

Carbamoyl phosphate contacts are provided by residues 50 to 53 (STRT), Gln-77, Arg-101, and 128 to 131 (HPCQ). L-ornithine contacts are provided by residues Asn-160, Asp-224, and 228 to 229 (SM). Carbamoyl phosphate is bound by residues 264–265 (CL) and Arg-292.

The protein belongs to the aspartate/ornithine carbamoyltransferase superfamily. OTCase family.

Its subcellular location is the cytoplasm. The catalysed reaction is carbamoyl phosphate + L-ornithine = L-citrulline + phosphate + H(+). The protein operates within amino-acid biosynthesis; L-arginine biosynthesis; L-arginine from L-ornithine and carbamoyl phosphate: step 1/3. Functionally, reversibly catalyzes the transfer of the carbamoyl group from carbamoyl phosphate (CP) to the N(epsilon) atom of ornithine (ORN) to produce L-citrulline. The chain is Ornithine carbamoyltransferase from Leifsonia xyli subsp. xyli (strain CTCB07).